We begin with the raw amino-acid sequence, 413 residues long: MLDLKFIRENTELVRKAVAARNTDAPIDEILELDSCRRTLSQELDTLRAKRKIIAKQRDEAAIEEGRVLRGRISELETGLSEVEEKLTDRLLRVPNIPDASVPVGKDESENVVLYYRGEKRNFSFTPKPHWELGEALDIIDFDRGIKLSGSRFYILKGEGARLQRALIAFMLDLHTRKHGYTEIYPPYMIKRECLVASGNLPKFADNLYHDAEEDYWWVPTAEAPLTNLHRDEILSVEQLPIHYVAYTACFRREKMSAGKDVRGIKRLHQFDKVELYKYCKPEDSFDELEKMVADAEEIADALKIPYRLKQLVTADISFGSAKSYDIEMYSPGVDEWLEVSSCSNCTDFQGRRANVRFRRTPEAKPEFVHTLNGSGLALPRVMISVIENYQLPDGSIVVPEVLRPFMGVDAIC.

221–223 (TAE) lines the L-serine pocket. An ATP-binding site is contributed by 252-254 (RRE). Glu-275 is a binding site for L-serine. Residue 339–342 (EVSS) coordinates ATP. Ser-375 lines the L-serine pocket.

It belongs to the class-II aminoacyl-tRNA synthetase family. Type-1 seryl-tRNA synthetase subfamily. Homodimer. The tRNA molecule binds across the dimer.

It is found in the cytoplasm. It catalyses the reaction tRNA(Ser) + L-serine + ATP = L-seryl-tRNA(Ser) + AMP + diphosphate + H(+). The catalysed reaction is tRNA(Sec) + L-serine + ATP = L-seryl-tRNA(Sec) + AMP + diphosphate + H(+). Its pathway is aminoacyl-tRNA biosynthesis; selenocysteinyl-tRNA(Sec) biosynthesis; L-seryl-tRNA(Sec) from L-serine and tRNA(Sec): step 1/1. Functionally, catalyzes the attachment of serine to tRNA(Ser). Is also able to aminoacylate tRNA(Sec) with serine, to form the misacylated tRNA L-seryl-tRNA(Sec), which will be further converted into selenocysteinyl-tRNA(Sec). In Dehalococcoides mccartyi (strain ATCC BAA-2266 / KCTC 15142 / 195) (Dehalococcoides ethenogenes (strain 195)), this protein is Serine--tRNA ligase.